We begin with the raw amino-acid sequence, 227 residues long: Ribosomal RNA large subunit methyltransferase E (227 aa).

S-adenosyl-L-methionine is bound by residues Gly78, Trp80, Asp103, Asp119, and Asp143. The active-site Proton acceptor is Lys183.

This sequence belongs to the class I-like SAM-binding methyltransferase superfamily. RNA methyltransferase RlmE family.

Its subcellular location is the cytoplasm. The enzyme catalyses uridine(2552) in 23S rRNA + S-adenosyl-L-methionine = 2'-O-methyluridine(2552) in 23S rRNA + S-adenosyl-L-homocysteine + H(+). Functionally, specifically methylates the uridine in position 2552 of 23S rRNA at the 2'-O position of the ribose in the fully assembled 50S ribosomal subunit. The polypeptide is Ribosomal RNA large subunit methyltransferase E (Rickettsia akari (strain Hartford)).